We begin with the raw amino-acid sequence, 1029 residues long: Endosome/lysosome-associated apoptosis and autophagy regulator family member 2 (1029 aa).

An N-terminal signal peptide occupies residues 1–47 (MLFRARGPVRGRGWGRPAEAPRRGRSPPWSPAWICCWALAGCQAAWA). At 48 to 929 (GDLPSSSSRP…TCETVDFWLK (882 aa)) the chain is on the extracellular side. N-linked (GlcNAc...) asparagine glycosylation is present at asparagine 169. 3 cysteine pairs are disulfide-bonded: cysteine 293-cysteine 310, cysteine 323-cysteine 346, and cysteine 326-cysteine 358. N-linked (GlcNAc...) asparagine glycosylation is found at asparagine 405 and asparagine 691. Residues 672 to 877 (SDCFFYHEKE…LWESAEACPL (206 aa)) enclose the MRH domain. Intrachain disulfides connect cysteine 674/cysteine 720, cysteine 730/cysteine 758, cysteine 827/cysteine 863, and cysteine 839/cysteine 875. A helical transmembrane segment spans residues 930–950 (VGAGVGAFTAVLLVALTCYFW). The Cytoplasmic portion of the chain corresponds to 951-1029 (KKNQKLEYKY…QLKTSRSPNI (79 aa)). Serine 1018 bears the Phosphoserine mark.

Belongs to the ELAPOR family.

It is found in the cell membrane. In terms of biological role, functions as a regulator of the BMP signaling pathway and may be involved in epidermal differentiation. This Homo sapiens (Human) protein is Endosome/lysosome-associated apoptosis and autophagy regulator family member 2.